Reading from the N-terminus, the 353-residue chain is Chemerin-like receptor 2 (353 aa).

Residues 1–41 lie on the Extracellular side of the membrane; the sequence is MEVSREMLFEELDNYSYALEYYSQEPDAEENVYPGIVHWIS. Asn-14 carries an N-linked (GlcNAc...) asparagine glycan. A helical transmembrane segment spans residues 42-62; the sequence is LLLYALAFVLGIPGNAIVIWF. Topologically, residues 63-73 are cytoplasmic; sequence MGFKWKKTVTT. A helical transmembrane segment spans residues 74 to 94; the sequence is LWFLNLAIADFVFVLFLPLYI. The Extracellular segment spans residues 95-112; the sequence is SYVALSFHWPFGRWLCKL. Cysteines 110 and 187 form a disulfide. A helical membrane pass occupies residues 113-133; that stretch reads NSFIAQLNMFSSVFFLTVISL. At 134–154 the chain is on the cytoplasmic side; the sequence is DRYIHLIHPGLSHPHRTLKNS. Residues 155–175 traverse the membrane as a helical segment; sequence LLVVLFVWLLASLLGGPTLYF. The Extracellular portion of the chain corresponds to 176–210; it reads RDTVEVNNRIICYNNFQEYELTLMRHHVLTWVKFL. Residues 211–231 traverse the membrane as a helical segment; it reads FGYLLPLLTMSSCYLCLIFKT. Over 232–247 the chain is Cytoplasmic; the sequence is KKQNILISSKHLWMIL. The chain crosses the membrane as a helical span at residues 248 to 268; it reads SVVIAFMVCWTPFHLFSIWEL. Topologically, residues 269–286 are extracellular; sequence SIHHNSSFQNVLQGGIPL. Residues 287 to 307 form a helical membrane-spanning segment; it reads STGLAFLNSCLNPILYVLISK. The Cytoplasmic portion of the chain corresponds to 308–353; that stretch reads KFQARFRASVAEVLKRSLWEASCSGTVSEQLRSAETKSLSLLETAQ.

It belongs to the chemokine-like receptor (CMKLR) family.

The protein localises to the cell membrane. Its function is as follows. Receptor for chemoattractant adipokine chemerin/RARRES2 suggesting a role for this receptor in the regulation of inflammation and energy homesotasis. Signals mainly via beta-arrestin pathway. Binding of RARRES2 activates weakly G proteins, calcium mobilization and MAPK1/MAPK3 (ERK1/2) phosphorylation too. Acts also as a receptor for TAFA1, mediates its effects on neuronal stem-cell proliferation and differentiation via the activation of ROCK/ERK and ROCK/STAT3 signaling pathway. The polypeptide is Chemerin-like receptor 2 (Cmklr2) (Rattus norvegicus (Rat)).